The chain runs to 328 residues: Probable cell division protein WhiA (328 aa).

Residues 276 to 309 constitute a DNA-binding region (H-T-H motif); it reads SLEELGRLADPQMTKDAVAGRIRRLLHMADKKAS.

It belongs to the WhiA family.

Functionally, involved in cell division and chromosome segregation. In Corynebacterium diphtheriae (strain ATCC 700971 / NCTC 13129 / Biotype gravis), this protein is Probable cell division protein WhiA.